Consider the following 215-residue polypeptide: Orotate phosphoribosyltransferase (215 aa).

Lys-26 contributes to the 5-phospho-alpha-D-ribose 1-diphosphate binding site. Position 34 to 35 (34 to 35 (FF)) interacts with orotate. 5-phospho-alpha-D-ribose 1-diphosphate is bound by residues 72–73 (YK), Arg-99, Lys-100, Lys-103, His-105, and 124–132 (DDVITAGTA). Orotate is bound by residues Thr-128 and Arg-156.

This sequence belongs to the purine/pyrimidine phosphoribosyltransferase family. PyrE subfamily. Homodimer. It depends on Mg(2+) as a cofactor.

The enzyme catalyses orotidine 5'-phosphate + diphosphate = orotate + 5-phospho-alpha-D-ribose 1-diphosphate. Its pathway is pyrimidine metabolism; UMP biosynthesis via de novo pathway; UMP from orotate: step 1/2. Its function is as follows. Catalyzes the transfer of a ribosyl phosphate group from 5-phosphoribose 1-diphosphate to orotate, leading to the formation of orotidine monophosphate (OMP). In Shewanella oneidensis (strain ATCC 700550 / JCM 31522 / CIP 106686 / LMG 19005 / NCIMB 14063 / MR-1), this protein is Orotate phosphoribosyltransferase.